Here is a 139-residue protein sequence, read N- to C-terminus: Large ribosomal subunit protein uL16 (139 aa).

The protein belongs to the universal ribosomal protein uL16 family. Part of the 50S ribosomal subunit.

In terms of biological role, binds 23S rRNA and is also seen to make contacts with the A and possibly P site tRNAs. The sequence is that of Large ribosomal subunit protein uL16 (rplP) from Neorickettsia sennetsu (strain ATCC VR-367 / Miyayama) (Ehrlichia sennetsu).